We begin with the raw amino-acid sequence, 1265 residues long: Methionine synthase (1265 aa).

Positions 19-338 (RDEINAILQK…DHIREIAEAV (320 aa)) constitute a Hcy-binding domain. 3 residues coordinate Zn(2+): C260, C323, and C324. The Pterin-binding domain maps to 371–632 (FVNIGERCNV…IHKELLQLCE (262 aa)). Residues 382–384 (GSR), D449, N470, D537, N579, R585, and R591 contribute to the (6S)-5,6,7,8-tetrahydrofolate site. The B12-binding N-terminal domain maps to 662–759 (QTDEWRNGPV…FMEKEREETR (98 aa)). Methylcob(III)alamin-binding positions include E709, 782 to 786 (GDVHD), H785, S830, T834, and A886. Residues 772–907 (QGTIVLATVK…DENLKDEYFE (136 aa)) form the B12-binding domain. In terms of domain architecture, AdoMet activation spans 923–1265 (SLKERRYLPL…LGPILGYDTD (343 aa)). S-adenosyl-L-methionine is bound by residues D974, R1172, and 1227 to 1228 (YF). T1264 bears the Phosphothreonine mark.

It belongs to the vitamin-B12 dependent methionine synthase family. In terms of assembly, monomer. Dimer. Forms a multiprotein complex with MMACHC, MMADHC and MTRR. The cofactor is methylcob(III)alamin. Zn(2+) serves as cofactor. Widely expressed. Expressed at the highest levels in pancreas, heart, brain, skeletal muscle and placenta. Expressed at lower levels in lung, liver and kidney.

The protein resides in the cytoplasm. It catalyses the reaction (6S)-5-methyl-5,6,7,8-tetrahydrofolate + L-homocysteine = (6S)-5,6,7,8-tetrahydrofolate + L-methionine. Its pathway is amino-acid biosynthesis; L-methionine biosynthesis via de novo pathway; L-methionine from L-homocysteine (MetH route): step 1/1. Catalyzes the transfer of a methyl group from methylcob(III)alamin (MeCbl) to homocysteine, yielding enzyme-bound cob(I)alamin and methionine in the cytosol. MeCbl is an active form of cobalamin (vitamin B12) used as a cofactor for methionine biosynthesis. Cob(I)alamin form is regenerated to MeCbl by a transfer of a methyl group from 5-methyltetrahydrofolate. The processing of cobalamin in the cytosol occurs in a multiprotein complex composed of at least MMACHC, MMADHC, MTRR (methionine synthase reductase) and MTR which may contribute to shuttle safely and efficiently cobalamin towards MTR in order to produce methionine. This Homo sapiens (Human) protein is Methionine synthase.